An 806-amino-acid polypeptide reads, in one-letter code: Dimethyl sulfoxide reductase DmsA (806 aa).

Positions 1-35 (MSNFNQISRRDFVKASSAGAALAVSNLTLPFNVMA) form a signal peptide, tat-type signal. Residues 47–109 (ERIVWSACTV…SMRRRVYNPD (63 aa)) form the 4Fe-4S Mo/W bis-MGD-type domain. Residues cysteine 54, cysteine 58, cysteine 62, and cysteine 95 each contribute to the [4Fe-4S] cluster site. Mo-bis(molybdopterin guanine dinucleotide) contacts are provided by residues 163 to 167 (LGGTM), serine 196, 236 to 237 (ET), 262 to 263 (ID), 283 to 285 (GTD), 378 to 379 (WG), arginine 382, asparagine 480, 504 to 505 (ID), histidine 693, 699 to 701 (HST), asparagine 780, and 796 to 797 (QH). A disordered region spans residues 786 to 806 (RPSPLAKGNPQHSNLVQVERL). The segment covering 795-806 (PQHSNLVQVERL) has biased composition (polar residues).

This sequence belongs to the prokaryotic molybdopterin-containing oxidoreductase family. As to quaternary structure, heterotrimeric enzyme composed of a catalytic heterodimer (DmsAB) and a membrane anchor protein (DmsC). The cofactor is [4Fe-4S] cluster. Mo-bis(molybdopterin guanine dinucleotide) is required as a cofactor. In terms of processing, predicted to be exported by the Tat system. The position of the signal peptide cleavage has not been experimentally proven.

It localises to the cell membrane. The catalysed reaction is dimethyl sulfide + a menaquinone + H2O = dimethyl sulfoxide + a menaquinol. Functionally, catalyzes the reduction of dimethyl sulfoxide (DMSO) to dimethyl sulfide (DMS). The terminal DMSO reductase can also use various sulfoxides and N-oxide compounds as terminal electron acceptor in addition to DMSO. This Haemophilus influenzae (strain ATCC 51907 / DSM 11121 / KW20 / Rd) protein is Dimethyl sulfoxide reductase DmsA (dmsA).